Reading from the N-terminus, the 342-residue chain is Ketol-acid reductoisomerase (NADP(+)) (342 aa).

One can recognise a KARI N-terminal Rossmann domain in the interval 2–182 (AELFYDDDAD…GGLRAAGIKT (181 aa)). NADP(+)-binding positions include 25 to 28 (YGSQ), arginine 48, serine 51, serine 53, and 83 to 86 (DQHQ). The active site involves histidine 108. Glycine 134 provides a ligand contact to NADP(+). Positions 183–328 (TFTEETETDL…RELRKLFAWV (146 aa)) constitute a KARI C-terminal knotted domain. Mg(2+) is bound by residues aspartate 191, glutamate 195, glutamate 227, and glutamate 231. Position 252 (serine 252) interacts with substrate.

The protein belongs to the ketol-acid reductoisomerase family. It depends on Mg(2+) as a cofactor.

The catalysed reaction is (2R)-2,3-dihydroxy-3-methylbutanoate + NADP(+) = (2S)-2-acetolactate + NADPH + H(+). The enzyme catalyses (2R,3R)-2,3-dihydroxy-3-methylpentanoate + NADP(+) = (S)-2-ethyl-2-hydroxy-3-oxobutanoate + NADPH + H(+). It functions in the pathway amino-acid biosynthesis; L-isoleucine biosynthesis; L-isoleucine from 2-oxobutanoate: step 2/4. The protein operates within amino-acid biosynthesis; L-valine biosynthesis; L-valine from pyruvate: step 2/4. In terms of biological role, involved in the biosynthesis of branched-chain amino acids (BCAA). Catalyzes an alkyl-migration followed by a ketol-acid reduction of (S)-2-acetolactate (S2AL) to yield (R)-2,3-dihydroxy-isovalerate. In the isomerase reaction, S2AL is rearranged via a Mg-dependent methyl migration to produce 3-hydroxy-3-methyl-2-ketobutyrate (HMKB). In the reductase reaction, this 2-ketoacid undergoes a metal-dependent reduction by NADPH to yield (R)-2,3-dihydroxy-isovalerate. The polypeptide is Ketol-acid reductoisomerase (NADP(+)) (Beutenbergia cavernae (strain ATCC BAA-8 / DSM 12333 / CCUG 43141 / JCM 11478 / NBRC 16432 / NCIMB 13614 / HKI 0122)).